We begin with the raw amino-acid sequence, 333 residues long: Ribosomal protein L11 methyltransferase (333 aa).

S-adenosyl-L-methionine-binding residues include T160, G181, D203, and N267.

This sequence belongs to the methyltransferase superfamily. PrmA family.

The protein resides in the cytoplasm. It catalyses the reaction L-lysyl-[protein] + 3 S-adenosyl-L-methionine = N(6),N(6),N(6)-trimethyl-L-lysyl-[protein] + 3 S-adenosyl-L-homocysteine + 3 H(+). Its function is as follows. Methylates ribosomal protein L11. The chain is Ribosomal protein L11 methyltransferase from Lachnoclostridium phytofermentans (strain ATCC 700394 / DSM 18823 / ISDg) (Clostridium phytofermentans).